The sequence spans 592 residues: MNLKTGRVLKISGPLVVAEGMEEANIYDVVKVGEKRLIGEIIEMREDRASIQVYEETAGLAPGDPVITTGEPLSVELGPGLIEAMFDGIQRPLNAIKAKAGDFITRGVEVHSLDRDRKWHFTPLKKVGDTVEAGDVIGIVQETSIVEHKIMVPYGIKGTIETIEEGDFTVVDTVAKVKDKDKVSDLIMMQKWPVRRGRPYGRKLNPVEPMITGQRVIDTFFPVTKGGTACVPGPFGSGKTVVQHQLAKWADAQIVVYIGCGERGNEMTDVLNEFPELKDPKTGEPLMKRTVLIANTSNMPVAAREASIYTGITIGEYFRDMGYSVALMADSTSRWAEALREMSGRLEEMPGDEGYPAYLGSRAADFYERAGKVLSLGSEGREGALTVIGAVSPPGGDLSEPVTQATLRIVKVFWGLDSQLAYRRHFPAINWLNSYSLYLEKISPWMDENVASDWTALRTRAMSLLQEEANLEEIVRLVGIDALSEKDRLKLEVAKSLREDYLQQNAFHEVDTYASLEKQYKMLKLVLFFYDETQRALNAGVYLKELLDLEVRDKIARAKYVSEESIENIDAIFNELSEVIDELISKGGIMNA.

An ATP-binding site is contributed by Gly233–Thr240.

It belongs to the ATPase alpha/beta chains family.

The enzyme catalyses ATP + H2O + 4 H(+)(in) = ADP + phosphate + 5 H(+)(out). Produces ATP from ADP in the presence of a proton gradient across the membrane. The V-type alpha chain is a catalytic subunit. The protein is V-type ATP synthase alpha chain of Clostridium botulinum (strain Okra / Type B1).